The chain runs to 42 residues: Histone H1B (42 aa).

The 42-residue stretch at 1–42 (TYYELIKAAILALKERNGSSAQAIKKYILENNKIEFQQTFLR) folds into the H15 domain.

Belongs to the histone H1/H5 family.

It is found in the nucleus. Its subcellular location is the chromosome. Its function is as follows. Histones H1 are necessary for the condensation of nucleosome chains into higher-order structures. The polypeptide is Histone H1B (Olisthodiscus luteus (Marine phytoflagellate)).